We begin with the raw amino-acid sequence, 75 residues long: Sec-independent protein translocase protein TatA (75 aa).

A helical transmembrane segment spans residues 1–21 (MGSFSIWHWLIVLVIVLLVFG). Residues 41–75 (KGMHDDDKPAGKLGDDSRSAEQAREAQAERDRDAR) form a disordered region.

The protein belongs to the TatA/E family. As to quaternary structure, the Tat system comprises two distinct complexes: a TatABC complex, containing multiple copies of TatA, TatB and TatC subunits, and a separate TatA complex, containing only TatA subunits. Substrates initially bind to the TatABC complex, which probably triggers association of the separate TatA complex to form the active translocon.

Its subcellular location is the cell inner membrane. Its function is as follows. Part of the twin-arginine translocation (Tat) system that transports large folded proteins containing a characteristic twin-arginine motif in their signal peptide across membranes. TatA could form the protein-conducting channel of the Tat system. This is Sec-independent protein translocase protein TatA from Xanthomonas campestris pv. campestris (strain 8004).